We begin with the raw amino-acid sequence, 467 residues long: Glutamate--tRNA ligase (467 aa).

Residues Pro-9–Gly-19 carry the 'HIGH' region motif. The short motif at Lys-250–Arg-254 is the 'KMSKS' region element. Lys-253 is a binding site for ATP.

Belongs to the class-I aminoacyl-tRNA synthetase family. Glutamate--tRNA ligase type 1 subfamily. In terms of assembly, monomer.

The protein localises to the cytoplasm. The catalysed reaction is tRNA(Glu) + L-glutamate + ATP = L-glutamyl-tRNA(Glu) + AMP + diphosphate. Catalyzes the attachment of glutamate to tRNA(Glu) in a two-step reaction: glutamate is first activated by ATP to form Glu-AMP and then transferred to the acceptor end of tRNA(Glu). The polypeptide is Glutamate--tRNA ligase (Mesomycoplasma hyopneumoniae (strain J / ATCC 25934 / NCTC 10110) (Mycoplasma hyopneumoniae)).